A 522-amino-acid chain; its full sequence is L-aspartate oxidase (522 aa).

Residues 16–19 (SGMA) and 45–52 (SSAWAQGG) contribute to the FAD site. Arg-277 acts as the Proton donor/acceptor in catalysis. FAD is bound by residues Glu-360 and 376-377 (SL).

It belongs to the FAD-dependent oxidoreductase 2 family. NadB subfamily. FAD is required as a cofactor.

Its subcellular location is the cytoplasm. It carries out the reaction L-aspartate + O2 = iminosuccinate + H2O2. The protein operates within cofactor biosynthesis; NAD(+) biosynthesis; iminoaspartate from L-aspartate (oxidase route): step 1/1. In terms of biological role, catalyzes the oxidation of L-aspartate to iminoaspartate, the first step in the de novo biosynthesis of NAD(+). The protein is L-aspartate oxidase (nadB) of Agrobacterium fabrum (strain C58 / ATCC 33970) (Agrobacterium tumefaciens (strain C58)).